Here is a 522-residue protein sequence, read N- to C-terminus: GMP synthase [glutamine-hydrolyzing] (522 aa).

Positions 9–204 constitute a Glutamine amidotransferase type-1 domain; the sequence is KILILDFGAQ…VVDICGCQML (196 aa). The active-site Nucleophile is Cys86. Residues His178 and Glu180 contribute to the active site. In terms of domain architecture, GMPS ATP-PPase spans 205–397; it reads WTAANIIEDQ…LGLPHAMVYR (193 aa). 232–238 serves as a coordination point for ATP; that stretch reads SGGVDSS.

In terms of assembly, homodimer.

It catalyses the reaction XMP + L-glutamine + ATP + H2O = GMP + L-glutamate + AMP + diphosphate + 2 H(+). The protein operates within purine metabolism; GMP biosynthesis; GMP from XMP (L-Gln route): step 1/1. In terms of biological role, catalyzes the synthesis of GMP from XMP. This Xylella fastidiosa (strain 9a5c) protein is GMP synthase [glutamine-hydrolyzing] (guaA).